Consider the following 260-residue polypeptide: Hydroxypyruvate/pyruvate aldolase Bphyt_0320 (260 aa).

His48 acts as the Proton acceptor in catalysis. A divalent metal cation contacts are provided by Glu157 and Asp183.

Belongs to the HpcH/HpaI aldolase family. It depends on Mn(2+) as a cofactor. Requires Mg(2+) as cofactor. Co(2+) is required as a cofactor.

It catalyses the reaction D-glyceraldehyde + 3-hydroxypyruvate = 2-dehydro-D-gluconate. The enzyme catalyses D-glyceraldehyde + pyruvate = 2-dehydro-3-deoxy-L-galactonate. The catalysed reaction is 2-dehydro-3-deoxy-D-gluconate = D-glyceraldehyde + pyruvate. Aldolase which can catalyze in vitro the aldolisation reaction between hydroxypyruvate (HPA) or pyruvate (PA) and D-glyceraldehyde (D-GA). The condensation of hydroxypyruvate and D-glyceraldehyde produces 2-dehydro-D-gluconate. The condensation of pyruvate and D-glyceraldehyde produces 2-dehydro-3-deoxy-L-galactonate as the major product and 2-dehydro-3-deoxy-D-gluconate. Also catalyzes the retro-aldol type decarboxylation of oxaloacetate, a general property of known pyruvate aldolases. The polypeptide is Hydroxypyruvate/pyruvate aldolase Bphyt_0320 (Paraburkholderia phytofirmans (strain DSM 17436 / LMG 22146 / PsJN) (Burkholderia phytofirmans)).